Consider the following 893-residue polypeptide: TBC domain-containing protein kinase-like protein (893 aa).

Positions 1 to 273 constitute a Protein kinase domain; that stretch reads MFPLKDAEMG…PDELMKDQVF (273 aa). The Rab-GAP TBC domain occupies 466–651; that stretch reads DIPPLMRGLT…HLWDTLLLGN (186 aa).

The protein belongs to the protein kinase superfamily. In terms of assembly, component of the FERRY complex composed of five subunits, TBCK, PPP1R21, FERRY3, CRYZL1 and GATD1 with a ratio of 1:2:1:2:4, respectively.

It localises to the cytoplasm. It is found in the cytoskeleton. The protein resides in the spindle. Its subcellular location is the midbody. The protein localises to the early endosome. Component of the FERRY complex (Five-subunit Endosomal Rab5 and RNA/ribosome intermediary). The FERRY complex directly interacts with mRNAs and RAB5A, and functions as a RAB5A effector involved in the localization and the distribution of specific mRNAs most likely by mediating their endosomal transport. The complex recruits mRNAs and ribosomes to early endosomes through direct mRNA-interaction. Also involved in the modulation of mTOR signaling and expression of mTOR complex components. Involved in the control of actin-cytoskeleton organization. The protein is TBC domain-containing protein kinase-like protein (Tbck) of Mus musculus (Mouse).